The following is a 536-amino-acid chain: Arylsulfatase K (536 aa).

The first 22 residues, 1–22 (MLLLWVSVVAALALAVLAPGAG), serve as a signal peptide directing secretion. Positions 40 and 80 each coordinate Ca(2+). The active-site Nucleophile is Cys-80. Cys-80 carries the 3-oxoalanine (Cys) modification. Asn-108 is a glycosylation site (N-linked (GlcNAc...) asparagine). Position 128 (Lys-128) interacts with substrate. N-linked (GlcNAc...) asparagine glycosylation is found at Asn-166 and Asn-193. His-251 provides a ligand contact to substrate. An N-linked (GlcNAc...) asparagine glycan is attached at Asn-262. Positions 313 and 314 each coordinate Ca(2+). N-linked (GlcNAc...) asparagine glycans are attached at residues Asn-375, Asn-413, and Asn-498.

The protein belongs to the sulfatase family. Ca(2+) serves as cofactor. In terms of processing, the conversion to 3-oxoalanine (also known as C-formylglycine, FGly), of a serine or cysteine residue in prokaryotes and of a cysteine residue in eukaryotes, is critical for catalytic activity. The 75-kDa precursor undergoes proteolytic processing to yield a 23 kDa form. Post-translationally, N-glycosylated with both high mannose and complex type sugars. Expressed at high levels in the placenta and pancreas. Expressed at intermediate levels in the lung, brain, heart, liver and kidney and at low levels in the muscle.

Its subcellular location is the secreted. The protein resides in the lysosome. It catalyses the reaction an aryl sulfate + H2O = a phenol + sulfate + H(+). The catalysed reaction is Hydrolysis of the 2-sulfate groups of the 2-O-sulfo-D-glucuronate residues of chondroitin sulfate, heparin and heparitin sulfate.. Its function is as follows. Catalyzes the hydrolysis of pseudosubstrates such as p-nitrocatechol sulfate and p-nitrophenyl sulfate. Catalyzes the hydrolysis of the 2-sulfate groups of the 2-O-sulfo-D-glucuronate residues of chondroitin sulfate, heparin and heparitin sulfate. Acts selectively on 2-sulfoglucuronate and lacks activity against 2-sulfoiduronate. The sequence is that of Arylsulfatase K (ARSK) from Homo sapiens (Human).